Reading from the N-terminus, the 183-residue chain is Phosphinothricin N-acetyltransferase (183 aa).

An N-acetyltransferase domain is found at 8-173; sequence ADIRRATEAD…WQLDFSLPVP (166 aa). Acetyl-CoA-binding positions include 91 to 93, 99 to 104, and Asn130; these read VYV and RTGLGS.

The protein belongs to the acetyltransferase family. PAT/BAR subfamily.

It carries out the reaction phosphinothricin + acetyl-CoA = N-acetylphosphinothricin + CoA + H(+). Functionally, inactivates phosphinothricin (PPT) by transfer of an acetyl group from acetyl CoA. Can also acetylate demethylphosphinothricin but not PTT or glutamate. This enzyme is an effector of phosphinothricin tripeptide (PTT or bialaphos) resistance. The sequence is that of Phosphinothricin N-acetyltransferase from Streptomyces hygroscopicus.